The chain runs to 364 residues: Cobalt-precorrin-5B C(1)-methyltransferase (364 aa).

Belongs to the CbiD family.

The enzyme catalyses Co-precorrin-5B + S-adenosyl-L-methionine = Co-precorrin-6A + S-adenosyl-L-homocysteine. It participates in cofactor biosynthesis; adenosylcobalamin biosynthesis; cob(II)yrinate a,c-diamide from sirohydrochlorin (anaerobic route): step 6/10. In terms of biological role, catalyzes the methylation of C-1 in cobalt-precorrin-5B to form cobalt-precorrin-6A. The sequence is that of Cobalt-precorrin-5B C(1)-methyltransferase from Pseudomonas putida (strain ATCC 47054 / DSM 6125 / CFBP 8728 / NCIMB 11950 / KT2440).